A 310-amino-acid polypeptide reads, in one-letter code: Phosphoribosylaminoimidazole-succinocarboxamide synthase (310 aa).

Belongs to the SAICAR synthetase family.

The enzyme catalyses 5-amino-1-(5-phospho-D-ribosyl)imidazole-4-carboxylate + L-aspartate + ATP = (2S)-2-[5-amino-1-(5-phospho-beta-D-ribosyl)imidazole-4-carboxamido]succinate + ADP + phosphate + 2 H(+). The protein operates within purine metabolism; IMP biosynthesis via de novo pathway; 5-amino-1-(5-phospho-D-ribosyl)imidazole-4-carboxamide from 5-amino-1-(5-phospho-D-ribosyl)imidazole-4-carboxylate: step 1/2. The polypeptide is Phosphoribosylaminoimidazole-succinocarboxamide synthase (Xanthomonas axonopodis pv. citri (strain 306)).